The primary structure comprises 65 residues: Large ribosomal subunit protein bL35 (65 aa).

It belongs to the bacterial ribosomal protein bL35 family.

This chain is Large ribosomal subunit protein bL35, found in Paraburkholderia phytofirmans (strain DSM 17436 / LMG 22146 / PsJN) (Burkholderia phytofirmans).